The sequence spans 364 residues: MAVAGAVKTSGGVQFCSEFENDDSDFRRVVLLYVDGPFGVGKTVTAKTLMQMPNWRGCRLYLAEPMQAWRQWFGGADMIKEINEIQTLKASGKLECREASPVAVAEVQMTIAAPLRIMNHVIYNYLGSERCYSAAASGPDDVLFLVDRHPLAACLCFPVAQYLSGALEFGDLITLLSGIPDIPTHSNIVLMDLDICEQARRIIQRGRPGETVDWTYLCALRNSYICLMNTTTYLQRTSYPALLKEQEALTSATLLKFKRECLETATVPEINPSIDQTLFAILAFDQQNVHGERLKTVLSFVVQKLATVLKNLCIFYLPAHGLTPEACALKCLEFAETASSLTTKRAAIASLIDAVERYNADMGS.

36–43 provides a ligand contact to ATP; sequence GPFGVGKT. Glu64 acts as the Proton acceptor in catalysis. Position 108 (Gln108) interacts with substrate. Arg201 serves as a coordination point for ATP. Position 207 (Arg207) interacts with substrate.

The protein belongs to the herpesviridae thymidine kinase family. Homodimer.

The catalysed reaction is thymidine + ATP = dTMP + ADP + H(+). Functionally, catalyzes the transfer of the gamma-phospho group of ATP to thymidine to generate dTMP in the salvage pathway of pyrimidine synthesis. The dTMP serves as a substrate for DNA polymerase during viral DNA replication. Allows the virus to be reactivated and to grow in non-proliferative cells lacking a high concentration of phosphorylated nucleic acid precursors. The sequence is that of Thymidine kinase from Infectious laryngotracheitis virus (strain Thorne V882) (ILTV).